The following is a 303-amino-acid chain: D-alanine--D-alanine ligase (303 aa).

The 197-residue stretch at 104–300 folds into the ATP-grasp domain; sequence KLLWNAVGLP…FEKLVERVLE (197 aa). Residue 132–187 coordinates ATP; sequence IAKLSLPVFVKPSSEGSSVGVFKVKTKEELLPAITAALEFDTIVLVEEFLTGAEYS. Mg(2+) contacts are provided by aspartate 254, glutamate 267, and asparagine 269.

This sequence belongs to the D-alanine--D-alanine ligase family. Mg(2+) is required as a cofactor. Requires Mn(2+) as cofactor.

It localises to the cytoplasm. It catalyses the reaction 2 D-alanine + ATP = D-alanyl-D-alanine + ADP + phosphate + H(+). The protein operates within cell wall biogenesis; peptidoglycan biosynthesis. Cell wall formation. This is D-alanine--D-alanine ligase from Haemophilus ducreyi (strain 35000HP / ATCC 700724).